The following is a 500-amino-acid chain: Perfringolysin O (500 aa).

The first 28 residues, 1 to 28 (MIRFKKTKLIASIAMALCLFSQPVISFS), serve as a signal peptide directing secretion. 4 consecutive transmembrane segments (beta stranded) span residues 189–202 (KSQI…NAKV), 209–218 (VDFNAVANNE), 287–296 (SKDVQAAFKA), and 304–316 (KNSQ…YENS). The short motif at 458–468 (ECTGLAWEWWR) is the Conserved undecapeptide element. A Cholesterol binding motif is present at residues 490–491 (TL).

It belongs to the cholesterol-dependent cytolysin family. As to quaternary structure, modeling based on cryo-EM shows a homooligomeric pore complex containing 38-44 subunits; when inserted in the host membrane.

The protein resides in the secreted. It is found in the host cell membrane. A cholesterol-dependent toxin that causes cytolysis by forming pores in cholesterol-containing host membranes. After binding to target membranes, the protein assembles into a pre-pore complex. A major conformational change leads to insertion in the host membrane and formation of an oligomeric pore complex. Cholesterol is required for binding to host cell membranes, membrane insertion and pore formation; cholesterol binding is mediated by a Thr-Leu pair in the C-terminus. Can be reversibly inactivated by oxidation. The polypeptide is Perfringolysin O (pfo) (Clostridium perfringens (strain 13 / Type A)).